Here is a 269-residue protein sequence, read N- to C-terminus: Formamidopyrimidine-DNA glycosylase (269 aa).

Proline 2 acts as the Schiff-base intermediate with DNA in catalysis. Glutamate 3 serves as the catalytic Proton donor. Lysine 57 (proton donor; for beta-elimination activity) is an active-site residue. DNA-binding residues include histidine 90, arginine 109, and arginine 150. The FPG-type zinc-finger motif lies at 235–269 (QVYGRAGEACLTCGTTIKRSKHGQRTTFYCPHCQR). Catalysis depends on arginine 259, which acts as the Proton donor; for delta-elimination activity.

The protein belongs to the FPG family. In terms of assembly, monomer. Zn(2+) serves as cofactor.

It carries out the reaction Hydrolysis of DNA containing ring-opened 7-methylguanine residues, releasing 2,6-diamino-4-hydroxy-5-(N-methyl)formamidopyrimidine.. The enzyme catalyses 2'-deoxyribonucleotide-(2'-deoxyribose 5'-phosphate)-2'-deoxyribonucleotide-DNA = a 3'-end 2'-deoxyribonucleotide-(2,3-dehydro-2,3-deoxyribose 5'-phosphate)-DNA + a 5'-end 5'-phospho-2'-deoxyribonucleoside-DNA + H(+). Involved in base excision repair of DNA damaged by oxidation or by mutagenic agents. Acts as a DNA glycosylase that recognizes and removes damaged bases. Has a preference for oxidized purines, such as 7,8-dihydro-8-oxoguanine (8-oxoG). Has AP (apurinic/apyrimidinic) lyase activity and introduces nicks in the DNA strand. Cleaves the DNA backbone by beta-delta elimination to generate a single-strand break at the site of the removed base with both 3'- and 5'-phosphates. The polypeptide is Formamidopyrimidine-DNA glycosylase (Edwardsiella ictaluri (strain 93-146)).